The chain runs to 544 residues: Major royal jelly protein 3 (544 aa).

The N-terminal stretch at Met-1–Ser-20 is a signal peptide. A glycan (N-linked (GlcNAc...) asparagine) is linked at Asn-183. The interval Arg-421–His-544 is disordered. 20 tandem repeats follow at residues Asn-424–Gly-428, Asn-429–Asp-433, Asn-434–Asp-438, Asn-439–Asn-443, Asn-444–Asp-448, Asn-449–Asn-453, Lys-454–Asn-458, Arg-459–Asn-463, Arg-464–Asn-468, Lys-469–Asn-473, Arg-474–Asn-478, Lys-479–Asn-483, Arg-484–Asn-488, Lys-489–Asn-493, Arg-494–Asn-498, Lys-499–Asn-503, Lys-504–Asn-508, Arg-509–Asn-513, Lys-514–Asn-518, and Arg-519–Asn-523. Composition is skewed to low complexity over residues Asn-424–Gln-460, Asn-468–Gln-510, and Asn-518–Asn-530. The tract at residues Asn-424–Asn-523 is 23 X 5 AA tandem repeats of [NKR]-[RQ]-N-[AGD]-[DNG]. The stretch at Gln-524–Asn-525 is one 21; half-length repeat. Repeat copies occupy residues Asn-526–Asn-530 and Asn-531–Asn-535.

The protein belongs to the major royal jelly protein family. In terms of assembly, homoligomer; in the absence of RNA, assembles into a higher-order oligomeric form, composed of around 20 monomer units. As to expression, found in and secreted from the hypopharyngeal glands of the worker honey bee (at protein level); expression peaks at 12 days post eclosion. Expressed in the brains of worker bees. Expressed in the brains of adult worker bees peaking at 12 days post eclosion (at protein level). Expressed in the spermatheca of adult queen bees (at protein level); Expression levels are higher in mated queens than in virgin queens. Expressed in queen bee ovaries and male drone testes. Expression in the head of forager worker bees is lower than in the heads of nurse worker bees.

Its subcellular location is the secreted. Its function is as follows. Abundant protein component of royal jelly, a substance produced in the hypopharyngeal gland containing proteins, free amino acids, fatty acids, sugars and other nutrients, which is fed to developing larvae by worker nurse bees. Major royal jelly proteins (MRJPs) are high in essential amino acids and probably have a nutritional function in larval food. All larvae are fed some royal jelly (also known as worker jelly) early in their development but it forms the principal source of nutrition for larvae destined to become queen bees. Secreted RNA-binding protein required to concentrate, stabilize and enhance environmental RNA bioavailability in the honey bee royal jelly. Acts as a RNA-aggregating protein: binds 18 nucleotides and longer single- and double-stranded RNA (ssRNA and dsRNA, respectively) in a non-specific manner. RNA-binding drives super-order assembly of oligomers into extracellular ribonucleoprotein granules that concentrate, protect and enhance RNA uptake granules, facilitating RNA transfer among bees. Produced in the spermatheca of adult queen bees, along with other major royal jelly proteins, where it may act as a nutrient supply for sperm stored by mated queens, or be involved in energy metabolism. This chain is Major royal jelly protein 3, found in Apis mellifera (Honeybee).